A 156-amino-acid chain; its full sequence is ATP synthase subunit b 2 (156 aa).

A helical transmembrane segment spans residues 11–31 (LLAFIFFVWFCMKFVWPPIMG).

Belongs to the ATPase B chain family. As to quaternary structure, F-type ATPases have 2 components, F(1) - the catalytic core - and F(0) - the membrane proton channel. F(1) has five subunits: alpha(3), beta(3), gamma(1), delta(1), epsilon(1). F(0) has three main subunits: a(1), b(2) and c(10-14). The alpha and beta chains form an alternating ring which encloses part of the gamma chain. F(1) is attached to F(0) by a central stalk formed by the gamma and epsilon chains, while a peripheral stalk is formed by the delta and b chains.

The protein resides in the cell inner membrane. F(1)F(0) ATP synthase produces ATP from ADP in the presence of a proton or sodium gradient. F-type ATPases consist of two structural domains, F(1) containing the extramembraneous catalytic core and F(0) containing the membrane proton channel, linked together by a central stalk and a peripheral stalk. During catalysis, ATP synthesis in the catalytic domain of F(1) is coupled via a rotary mechanism of the central stalk subunits to proton translocation. Its function is as follows. Component of the F(0) channel, it forms part of the peripheral stalk, linking F(1) to F(0). The protein is ATP synthase subunit b 2 of Pseudoalteromonas atlantica (strain T6c / ATCC BAA-1087).